Here is a 909-residue protein sequence, read N- to C-terminus: Aconitate hydratase A (909 aa).

Residues cysteine 450, cysteine 516, and cysteine 519 each contribute to the [4Fe-4S] cluster site.

The protein belongs to the aconitase/IPM isomerase family. In terms of assembly, monomer. It depends on [4Fe-4S] cluster as a cofactor.

It carries out the reaction citrate = D-threo-isocitrate. The catalysed reaction is 3-hydroxybutane-1,2,3-tricarboxylate = 2-methyl-cis-aconitate + H2O. Its pathway is carbohydrate metabolism; tricarboxylic acid cycle; isocitrate from oxaloacetate: step 2/2. Its function is as follows. Involved in both the tricarboxylic acid (TCA) and methylcitric acid cycles. Catalyzes the reversible isomerization of citrate to isocitrate via cis-aconitate. Also catalyzes the rehydration of 2-methyl-cis-aconitate to produce 2-methylisocitrate. The apo form of AcnA functions as a RNA-binding regulatory protein which plays a role in the regulation of citrate concentration and in the sporulation. To prevent the accumulation of excessive levels of citrate, it binds near the 5' end of the citZ mRNA, decreasing its stability and thereby limiting the concentration of citrate synthase in the cell. Aconitase also binds to the gerE transcript late in sporulation and stabilizes it for translation, thereby increasing the rate and level of GerE protein accumulation. The protein is Aconitate hydratase A (citB) of Bacillus subtilis (strain 168).